The following is an 886-amino-acid chain: Alanine--tRNA ligase (886 aa).

Positions 564, 568, 666, and 670 each coordinate Zn(2+).

The protein belongs to the class-II aminoacyl-tRNA synthetase family. Zn(2+) is required as a cofactor.

Its subcellular location is the cytoplasm. The catalysed reaction is tRNA(Ala) + L-alanine + ATP = L-alanyl-tRNA(Ala) + AMP + diphosphate. Catalyzes the attachment of alanine to tRNA(Ala) in a two-step reaction: alanine is first activated by ATP to form Ala-AMP and then transferred to the acceptor end of tRNA(Ala). Also edits incorrectly charged Ser-tRNA(Ala) and Gly-tRNA(Ala) via its editing domain. The chain is Alanine--tRNA ligase from Prochlorococcus marinus (strain AS9601).